A 684-amino-acid polypeptide reads, in one-letter code: Kelch repeat and BTB domain-containing protein 7 (684 aa).

Residues 1 to 27 are disordered; the sequence is MQSREDVPRSRRLASPRGGRRPKRISK. Over residues 10–26 the composition is skewed to basic residues; that stretch reads SRRLASPRGGRRPKRIS. Serine 29 is subject to Phosphoserine. Residues 63-138 enclose the BTB domain; that stretch reads CDVTIEVVTP…CYTGRVSLSE (76 aa). 5 Kelch repeats span residues 386-435, 436-484, 486-523, 524-564, and 567-616; these read AVCV…YLNG, YIYI…VVQN, LYAVNSKRMLCYDPSHNMWLNCASLKRSDFQEACVFND, EIYC…IVNH, and KLLL…CLCA. Residues 630–666 are disordered; the sequence is ITEEDDARSESSTEWDLDGFSELDSESGSSSSFSDDE. Residues 631–654 are compositionally biased toward acidic residues; it reads TEEDDARSESSTEWDLDGFSELDS. The short motif at 668–671 is the ATG8 interaction motif (AIM) element; that stretch reads WVQV.

As to quaternary structure, core component of a BCR3 (BTB-CUL3-RBX1) E3 ubiquitin ligase complex, also named Cul3-RING ubiquitin ligase complex CUL3(KBTBD6/7), composed of CUL3, RBX1, KBTBD6 and KBTBD7. Interacts with GABARAP; the interaction is direct and is required for the ubiquitination of TIAM1. Interacts with GABARAPL1, GABARAPL2 and MAP1LC3B; the interaction is direct.

The protein resides in the cytoplasm. The protein localises to the nucleus. It participates in protein modification; protein ubiquitination. As part of the CUL3(KBTBD6/7) E3 ubiquitin ligase complex functions as a substrate adapter for the RAC1 guanine exchange factor (GEF) TIAM1, mediating its 'Lys-48' ubiquitination and proteasomal degradation. By controlling this ubiquitination, regulates RAC1 signal transduction and downstream biological processes including the organization of the cytoskeleton, cell migration and cell proliferation. Ubiquitination of TIAM1 requires the membrane-associated protein GABARAP which may restrict locally the activity of the complex. This is Kelch repeat and BTB domain-containing protein 7 from Homo sapiens (Human).